The following is a 349-amino-acid chain: Heparin sulfate O-sulfotransferase (349 aa).

The Cytoplasmic segment spans residues 1–17 (MFRKLLKMWILLRPTHW). The helical; Signal-anchor for type II membrane protein transmembrane segment at 18–38 (LILIALCAVTCAGYWLLWSEI) threads the bilayer. The Lumenal segment spans residues 39-349 (RLEHAFKPLS…KFMYEKIRPK (311 aa)). N-linked (GlcNAc...) asparagine glycosylation is found at Asn107 and Asn126. Residues His139 and His141 contribute to the active site. Cystine bridges form between Cys200/Cys208 and Cys221/Cys227. Asn282 carries N-linked (GlcNAc...) asparagine glycosylation.

Belongs to the sulfotransferase 3 family. Homotrimer.

It is found in the golgi apparatus membrane. Its function is as follows. Catalyzes the transfer of sulfate to the C2-position of selected hexuronic acid residues within the maturing heparan sulfate (HS). This is Heparin sulfate O-sulfotransferase from Drosophila melanogaster (Fruit fly).